We begin with the raw amino-acid sequence, 661 residues long: UvrABC system protein B (661 aa).

The Helicase ATP-binding domain occupies 25–178 (EGILKGEKFQ…DEVIRELIRM (154 aa)). 38 to 45 (GVTGSGKT) is a binding site for ATP. A Beta-hairpin motif is present at residues 91–114 (YYDYYQPEAYIPETDTYIEKDSSI). The region spanning 429-591 (QIDHLIGEIR…IVPQTVRKGI (163 aa)) is the Helicase C-terminal domain. In terms of domain architecture, UVR spans 625 to 660 (EEYIKELEQQMKRFAIELEFEKAAKIRDKIFELKKL).

Belongs to the UvrB family. In terms of assembly, forms a heterotetramer with UvrA during the search for lesions. Interacts with UvrC in an incision complex.

The protein resides in the cytoplasm. Its function is as follows. The UvrABC repair system catalyzes the recognition and processing of DNA lesions. A damage recognition complex composed of 2 UvrA and 2 UvrB subunits scans DNA for abnormalities. Upon binding of the UvrA(2)B(2) complex to a putative damaged site, the DNA wraps around one UvrB monomer. DNA wrap is dependent on ATP binding by UvrB and probably causes local melting of the DNA helix, facilitating insertion of UvrB beta-hairpin between the DNA strands. Then UvrB probes one DNA strand for the presence of a lesion. If a lesion is found the UvrA subunits dissociate and the UvrB-DNA preincision complex is formed. This complex is subsequently bound by UvrC and the second UvrB is released. If no lesion is found, the DNA wraps around the other UvrB subunit that will check the other stand for damage. The sequence is that of UvrABC system protein B from Caldicellulosiruptor saccharolyticus (strain ATCC 43494 / DSM 8903 / Tp8T 6331).